The primary structure comprises 352 residues: rRNA 2'-O-methyltransferase fibrillarin (352 aa).

The tract at residues 1–115 (MGRPEFNRGG…GGAGGMRGGK (115 aa)) is disordered. An asymmetric dimethylarginine mark is found at R8, R16, R19, R23, R27, R35, R43, R51, R55, R58, R63, R67, R70, R75, R81, R85, R91, R95, R98, R102, R105, and R112. Residues 8 to 18 (RGGGGGGFRGG) show a composition bias toward gly residues. Residues 26 to 59 (SRGGFGGGGRGGYGGGDRGSFGGGDRGGFRGGRG) show a composition bias toward gly residues. Over residues 66-113 (FRGGRGGGDRGGFGGRGSPRGGFGGRGSPRGGRGSPRGGRGGAGGMRG) the composition is skewed to gly residues. Residues 203–204 (TT), 222–223 (EF), 247–248 (DA), and 267–270 (DVAQ) contribute to the S-adenosyl-L-methionine site.

This sequence belongs to the methyltransferase superfamily. Fibrillarin family. Component of box C/D small nucleolar ribonucleoprotein (snoRNP) particles. It is associated with the U3, U8 and U13 small nuclear RNAs. Post-translationally, by homology to other fibrillarins, some or all of the N-terminal domain arginines are modified to asymmetric dimethylarginine (DMA).

It is found in the nucleus. Its subcellular location is the nucleolus. The protein localises to the nucleoplasm. The catalysed reaction is L-glutaminyl-[histone H2A] + S-adenosyl-L-methionine = N(5)-methyl-L-glutaminyl-[histone H2A] + S-adenosyl-L-homocysteine + H(+). S-adenosyl-L-methionine-dependent methyltransferase that has the ability to methylate both RNAs and proteins. Involved in pre-rRNA processing. Utilizes the methyl donor S-adenosyl-L-methionine to catalyze the site-specific 2'-hydroxyl methylation of ribose moieties in pre-ribosomal RNA. Site specificity is provided by a guide RNA that base pairs with the substrate. Methylation occurs at a characteristic distance from the sequence involved in base pairing with the guide RNA. Also acts as a protein methyltransferase by mediating methylation of 'Gln-105' of histone H2A (H2AQ105me), a modification that impairs binding of the FACT complex and is specifically present at 35S ribosomal DNA locus. Plays a role in modulation of nucleolus size most likely through regulating the ribosomal RNA (rRNA) pool. The sequence is that of rRNA 2'-O-methyltransferase fibrillarin from Caenorhabditis elegans.